We begin with the raw amino-acid sequence, 178 residues long: MASISSTVATVSRAAPAQANMVAPFTGLKSNVAFPATKKANDFSTLPSNGGRVQCMKVWPPLGKKRYETLSYLPNLTEAQLAKEVDYLLRNKWVPCLEFELEHGFVYRENARSPGYYDGRYWTMWKLPMFGCTDSAQVMKELQECKKEYPQAWIRIIGFDNVRQVQCISFIASKPEGF.

The transit peptide at 1 to 54 directs the protein to the chloroplast; the sequence is MASISSTVATVSRAAPAQANMVAPFTGLKSNVAFPATKKANDFSTLPSNGGRVQ.

Belongs to the RuBisCO small chain family. As to quaternary structure, heterohexadecamer of 8 large and 8 small subunits.

It localises to the plastid. The protein resides in the chloroplast. Its function is as follows. RuBisCO catalyzes two reactions: the carboxylation of D-ribulose 1,5-bisphosphate, the primary event in carbon dioxide fixation, as well as the oxidative fragmentation of the pentose substrate. Both reactions occur simultaneously and in competition at the same active site. Although the small subunit is not catalytic it is essential for maximal activity. The polypeptide is Ribulose bisphosphate carboxylase small subunit, chloroplastic 2 (Flaveria pringlei).